A 95-amino-acid polypeptide reads, in one-letter code: Putative pterin-4-alpha-carbinolamine dehydratase (95 aa).

The protein belongs to the pterin-4-alpha-carbinolamine dehydratase family.

It carries out the reaction (4aS,6R)-4a-hydroxy-L-erythro-5,6,7,8-tetrahydrobiopterin = (6R)-L-erythro-6,7-dihydrobiopterin + H2O. The polypeptide is Putative pterin-4-alpha-carbinolamine dehydratase (Solibacter usitatus (strain Ellin6076)).